We begin with the raw amino-acid sequence, 133 residues long: Small ribosomal subunit protein uS11 (133 aa).

A disordered region spans residues 1 to 23 (MPPKTRGAVRKPRKKDKKNIALG). A compositionally biased stretch (basic residues) spans 7–17 (GAVRKPRKKDK).

Belongs to the universal ribosomal protein uS11 family. In terms of assembly, part of the 30S ribosomal subunit. Interacts with proteins S7 and S18. Binds to IF-3.

Its function is as follows. Located on the platform of the 30S subunit, it bridges several disparate RNA helices of the 16S rRNA. Forms part of the Shine-Dalgarno cleft in the 70S ribosome. The polypeptide is Small ribosomal subunit protein uS11 (Arthrobacter sp. (strain FB24)).